The primary structure comprises 305 residues: Tyrosine recombinase XerC (305 aa).

Positions 4–95 (TSIQELIDKW…AVKNFYRFLE (92 aa)) constitute a Core-binding (CB) domain. Residues 116-298 (LLPKALSEDD…SIKHLEAVYT (183 aa)) enclose the Tyr recombinase domain. Catalysis depends on residues arginine 159, lysine 182, histidine 250, arginine 253, and histidine 276. Tyrosine 285 serves as the catalytic O-(3'-phospho-DNA)-tyrosine intermediate.

This sequence belongs to the 'phage' integrase family. XerC subfamily. Forms a cyclic heterotetrameric complex composed of two molecules of XerC and two molecules of XerD.

The protein localises to the cytoplasm. Site-specific tyrosine recombinase, which acts by catalyzing the cutting and rejoining of the recombining DNA molecules. The XerC-XerD complex is essential to convert dimers of the bacterial chromosome into monomers to permit their segregation at cell division. It also contributes to the segregational stability of plasmids. The protein is Tyrosine recombinase XerC of Rickettsia felis (strain ATCC VR-1525 / URRWXCal2) (Rickettsia azadi).